Consider the following 143-residue polypeptide: D-aminoacyl-tRNA deacylase (143 aa).

Positions 135-136 (GP) match the Gly-cisPro motif, important for rejection of L-amino acids motif.

It belongs to the DTD family. Homodimer.

It is found in the cytoplasm. The enzyme catalyses glycyl-tRNA(Ala) + H2O = tRNA(Ala) + glycine + H(+). It carries out the reaction a D-aminoacyl-tRNA + H2O = a tRNA + a D-alpha-amino acid + H(+). Its function is as follows. An aminoacyl-tRNA editing enzyme that deacylates mischarged D-aminoacyl-tRNAs. Also deacylates mischarged glycyl-tRNA(Ala), protecting cells against glycine mischarging by AlaRS. Acts via tRNA-based rather than protein-based catalysis; rejects L-amino acids rather than detecting D-amino acids in the active site. By recycling D-aminoacyl-tRNA to D-amino acids and free tRNA molecules, this enzyme counteracts the toxicity associated with the formation of D-aminoacyl-tRNA entities in vivo and helps enforce protein L-homochirality. The sequence is that of D-aminoacyl-tRNA deacylase from Nocardia farcinica (strain IFM 10152).